Consider the following 342-residue polypeptide: Probable dual-specificity RNA methyltransferase RlmN (342 aa).

Glutamate 91 functions as the Proton acceptor in the catalytic mechanism. Residues 97-327 (YKHGNSICVS…TTIRREMGAD (231 aa)) form the Radical SAM core domain. A disulfide bridge connects residues cysteine 104 and cysteine 332. [4Fe-4S] cluster is bound by residues cysteine 111, cysteine 115, and cysteine 118. Residues 158–159 (GE), serine 190, 213–215 (SLH), and asparagine 289 each bind S-adenosyl-L-methionine. Residue cysteine 332 is the S-methylcysteine intermediate of the active site.

The protein belongs to the radical SAM superfamily. RlmN family. [4Fe-4S] cluster is required as a cofactor.

Its subcellular location is the cytoplasm. The catalysed reaction is adenosine(2503) in 23S rRNA + 2 reduced [2Fe-2S]-[ferredoxin] + 2 S-adenosyl-L-methionine = 2-methyladenosine(2503) in 23S rRNA + 5'-deoxyadenosine + L-methionine + 2 oxidized [2Fe-2S]-[ferredoxin] + S-adenosyl-L-homocysteine. The enzyme catalyses adenosine(37) in tRNA + 2 reduced [2Fe-2S]-[ferredoxin] + 2 S-adenosyl-L-methionine = 2-methyladenosine(37) in tRNA + 5'-deoxyadenosine + L-methionine + 2 oxidized [2Fe-2S]-[ferredoxin] + S-adenosyl-L-homocysteine. Its function is as follows. Specifically methylates position 2 of adenine 2503 in 23S rRNA and position 2 of adenine 37 in tRNAs. This chain is Probable dual-specificity RNA methyltransferase RlmN, found in Clostridium botulinum (strain Langeland / NCTC 10281 / Type F).